The chain runs to 433 residues: uncharacterized protein (433 aa).

Belongs to the mimivirus R160 family.

The protein resides in the virion. This is an uncharacterized protein from Acanthamoeba polyphaga mimivirus (APMV).